The primary structure comprises 370 residues: Arginine kinase (370 aa).

Residues Gln6–Asn89 form the Phosphagen kinase N-terminal domain. The region spanning Tyr115–Leu358 is the Phosphagen kinase C-terminal domain. ATP is bound by residues Ser118 to Arg122 and His181. Substrate is bound at residue Glu222. Arg226 is a binding site for ATP. Cys274 is a binding site for substrate. Residues Arg283 to His287 and Arg311 to Glu316 each bind ATP. Residue Glu316 participates in substrate binding.

Belongs to the ATP:guanido phosphotransferase family. In terms of assembly, homodimer. In terms of processing, the N-terminus is blocked.

It catalyses the reaction L-arginine + ATP = N(omega)-phospho-L-arginine + ADP + H(+). This Stichopus japonicus (Sea cucumber) protein is Arginine kinase (AK).